A 349-amino-acid chain; its full sequence is Homeobox-leucine zipper protein HOX7 (349 aa).

Positions 42 to 186 are disordered; it reads RATRRDEQDD…PKQKSDLANR (145 aa). Polar residues-rich tracts occupy residues 89-99 and 121-135; these read SAETGSANSEM and SSPS…RQQV. Residues 150 to 209 constitute a DNA-binding region (homeobox); that stretch reads GARKKLRLSKEQSSFLEDSFKEHSTLTPKQKSDLANRLNLRPRQVEVWFQNRRARTKLKQ. A compositionally biased stretch (basic and acidic residues) spans 167–183; the sequence is DSFKEHSTLTPKQKSDL. The leucine-zipper stretch occupies residues 208 to 252; sequence KQTEVDCEHLKRCCERLTRENRRLQREVAELRGTLRTTTSSYPPL.

This sequence belongs to the HD-ZIP homeobox family. Class II subfamily. As to quaternary structure, homodimer. May form a heterodimer with HOX1, HOX2 or HOX3. As to expression, expressed in seedlings, roots, leaves, nodes, internodes, flowers and embryo.

It is found in the nucleus. Its function is as follows. Probable transcription factor that binds to the DNA sequence 5'-CAAT[GC]ATTG-3'. This chain is Homeobox-leucine zipper protein HOX7 (HOX7), found in Oryza sativa subsp. japonica (Rice).